The following is a 272-amino-acid chain: Glutamate racemase (272 aa).

Residues 16-17 and 48-49 each bind substrate; these read DS and YG. Cys79 acts as the Proton donor/acceptor in catalysis. 80 to 81 contributes to the substrate binding site; the sequence is NT. The Proton donor/acceptor role is filled by Cys191. Residue 192–193 coordinates substrate; the sequence is TH.

Belongs to the aspartate/glutamate racemases family.

The enzyme catalyses L-glutamate = D-glutamate. Its pathway is cell wall biogenesis; peptidoglycan biosynthesis. In terms of biological role, provides the (R)-glutamate required for cell wall biosynthesis. This is Glutamate racemase from Chlorobaculum tepidum (strain ATCC 49652 / DSM 12025 / NBRC 103806 / TLS) (Chlorobium tepidum).